Here is a 416-residue protein sequence, read N- to C-terminus: Histidinol dehydrogenase (416 aa).

NAD(+)-binding residues include Y117, Q178, and N201. The substrate site is built by T224, Q246, and H249. Zn(2+) contacts are provided by Q246 and H249. Catalysis depends on proton acceptor residues E314 and H315. H315, D348, E402, and H407 together coordinate substrate. D348 provides a ligand contact to Zn(2+). Position 407 (H407) interacts with Zn(2+).

Belongs to the histidinol dehydrogenase family. It depends on Zn(2+) as a cofactor.

The catalysed reaction is L-histidinol + 2 NAD(+) + H2O = L-histidine + 2 NADH + 3 H(+). Its pathway is amino-acid biosynthesis; L-histidine biosynthesis; L-histidine from 5-phospho-alpha-D-ribose 1-diphosphate: step 9/9. Catalyzes the sequential NAD-dependent oxidations of L-histidinol to L-histidinaldehyde and then to L-histidine. This is Histidinol dehydrogenase from Staphylococcus aureus (strain Mu50 / ATCC 700699).